We begin with the raw amino-acid sequence, 378 residues long: Chaperone protein DnaJ (378 aa).

Positions 5 to 69 (EYYDRLGVSK…QKRAAYDQYG (65 aa)) constitute a J domain. The CR-type zinc-finger motif lies at 134-216 (GVEKEVSYNR…CHGTGHEKQA (83 aa)). Zn(2+) contacts are provided by cysteine 147, cysteine 150, cysteine 164, cysteine 167, cysteine 190, cysteine 193, cysteine 204, and cysteine 207. CXXCXGXG motif repeat units lie at residues 147–154 (CGTCLGSG), 164–171 (CRKCHGSG), 190–197 (CDICHGSG), and 204–211 (CQTCHGTG).

This sequence belongs to the DnaJ family. As to quaternary structure, homodimer. Zn(2+) is required as a cofactor.

It localises to the cytoplasm. Participates actively in the response to hyperosmotic and heat shock by preventing the aggregation of stress-denatured proteins and by disaggregating proteins, also in an autonomous, DnaK-independent fashion. Unfolded proteins bind initially to DnaJ; upon interaction with the DnaJ-bound protein, DnaK hydrolyzes its bound ATP, resulting in the formation of a stable complex. GrpE releases ADP from DnaK; ATP binding to DnaK triggers the release of the substrate protein, thus completing the reaction cycle. Several rounds of ATP-dependent interactions between DnaJ, DnaK and GrpE are required for fully efficient folding. Also involved, together with DnaK and GrpE, in the DNA replication of plasmids through activation of initiation proteins. The polypeptide is Chaperone protein DnaJ (Streptococcus pyogenes serotype M1).